The sequence spans 391 residues: Fructose-bisphosphate aldolase 3, chloroplastic (391 aa).

The transit peptide at 1–40 directs the protein to the chloroplast; sequence MASASFVKPNTLSSPWIGQRSFAHTSASSSPPPRVSFAIR. R88 contributes to the substrate binding site. S150 is subject to Phosphoserine. Position 178 (K178) interacts with substrate. S208 bears the Phosphoserine mark. Residue E218 is the Proton acceptor of the active site. Residue K260 is the Schiff-base intermediate with dihydroxyacetone-P of the active site. 302-304 lines the substrate pocket; it reads SGG. Position 387 is an N6,N6,N6-trimethyllysine (K387).

The protein belongs to the class I fructose-bisphosphate aldolase family. In terms of assembly, homotetramer. Can be trimethylated at Lys-387 by LSMT-L, but the trimethylation has no effect in vitro. In terms of processing, S-glutathionylated. In terms of tissue distribution, expressed in roots, and at low levels in rosettes leaves, cauline leaves, stems and flowers.

It localises to the plastid. Its subcellular location is the chloroplast. The protein localises to the plastoglobule. It catalyses the reaction beta-D-fructose 1,6-bisphosphate = D-glyceraldehyde 3-phosphate + dihydroxyacetone phosphate. It functions in the pathway carbohydrate degradation; glycolysis; D-glyceraldehyde 3-phosphate and glycerone phosphate from D-glucose: step 4/4. In terms of biological role, plays a key role in glycolysis and gluconeogenesis. The polypeptide is Fructose-bisphosphate aldolase 3, chloroplastic (Arabidopsis thaliana (Mouse-ear cress)).